The following is a 525-amino-acid chain: Polyamine aminopropyltransferase 1 (525 aa).

6 helical membrane passes run 21 to 41 (ALLV…ELIA), 53 to 73 (ILQF…GSWV), 89 to 109 (LELL…LLFA), 117 to 137 (LVLY…IPLV), 155 to 175 (VLTF…LVLA), and 180 to 200 (LVRT…WTLW). In terms of domain architecture, PABS spans 220 to 464 (AGMVGAALLA…GEWGFILAAP (245 aa)). The tract at residues 222 to 471 (MVGAALLAGF…AAPGRADFRP (250 aa)) is spermidine synthase. An S-methyl-5'-thioadenosine-binding site is contributed by Q259. Spermidine-binding residues include H289 and D313. S-methyl-5'-thioadenosine contacts are provided by residues D333 and 367–368 (DA). Catalysis depends on D385, which acts as the Proton acceptor.

It belongs to the spermidine/spermine synthase family. Homodimer or homotetramer.

It localises to the cell membrane. It carries out the reaction S-adenosyl 3-(methylsulfanyl)propylamine + putrescine = S-methyl-5'-thioadenosine + spermidine + H(+). It functions in the pathway amine and polyamine biosynthesis; spermidine biosynthesis; spermidine from putrescine: step 1/1. Functionally, catalyzes the irreversible transfer of a propylamine group from the amino donor S-adenosylmethioninamine (decarboxy-AdoMet) to putrescine (1,4-diaminobutane) to yield spermidine. This Ralstonia nicotianae (strain ATCC BAA-1114 / GMI1000) (Ralstonia solanacearum) protein is Polyamine aminopropyltransferase 1.